The sequence spans 448 residues: MSTMTPAEIVSELDKHIIGQGRAKKAVAVALRNRWRRQQVEEPLRQEITPKNILMIGPTGVGKTEIARRLAKLADAPFIKIEATKFTEVGYVGRDVDSIVRDLIEISVKQTRETEMRKVRTKAEDQAEDRILDILLPSARPVGFGASSGAADTVDEGSTTRQTFRKRLREGLLDDKEVELDVEQPQVGMDIMGPPGMEDMTEQIRSMFANIGGGKKTRRKMKVKEALKALTDEEAARMLNDEEVKTKAVQNVEQNGIVFLDEIDKIASRNEAGGGEVSRQGVQRDLLPLVEGTTINTKYGMVKTDHILFIASGAFHLAKPSDLIPELQGRFPIRVELDSLSVNDFESILVSTDASLVKQYQALLATEDVHLEFADDGIRRLAEIAYAVNEKTENIGARRLYTVIEKLLEEVSFAAGNHSGRTVQIDAAYVDRALNEVAEDEDLSRYVL.

ATP-binding positions include Ile-18, Gly-60–Glu-65, Asp-261, Glu-326, and Arg-398.

This sequence belongs to the ClpX chaperone family. HslU subfamily. As to quaternary structure, a double ring-shaped homohexamer of HslV is capped on each side by a ring-shaped HslU homohexamer. The assembly of the HslU/HslV complex is dependent on binding of ATP.

Its subcellular location is the cytoplasm. ATPase subunit of a proteasome-like degradation complex; this subunit has chaperone activity. The binding of ATP and its subsequent hydrolysis by HslU are essential for unfolding of protein substrates subsequently hydrolyzed by HslV. HslU recognizes the N-terminal part of its protein substrates and unfolds these before they are guided to HslV for hydrolysis. The polypeptide is ATP-dependent protease ATPase subunit HslU (Paraburkholderia xenovorans (strain LB400)).